The following is a 52-amino-acid chain: Large ribosomal subunit protein bL32c (52 aa).

This sequence belongs to the bacterial ribosomal protein bL32 family.

It is found in the plastid. The protein resides in the chloroplast. The polypeptide is Large ribosomal subunit protein bL32c (Eucalyptus globulus subsp. globulus (Tasmanian blue gum)).